We begin with the raw amino-acid sequence, 326 residues long: Pancreas transcription factor 1 subunit alpha (326 aa).

A bHLH domain is found at 162 to 214 (QLRQAANVRERRRMQSINDAFEGLRSHIPTLPYEKRLSKVDTLRLAIGYINFL). Over residues 229 to 240 (TGGCGGPGGSRH) the composition is skewed to gly residues. 2 disordered regions span residues 229-249 (TGGC…PGNQ) and 304-326 (DPRK…EFVS).

In terms of assembly, component of the pancreas transcription factor 1 complex (PTF1) which is composed of TCF3/p75, TCF12/p64 and PTF1A/p48. TCF3 is responsible for the nuclear import of the p48/p64 complex. Interacts with TCF3 and RBPSUH/RBP-Jkappa. Exocrine pancreas-specific. Expressed in azaserine-induced pancreatic tumors (at protein level). Expressed in AR42J cells but not in ARIP, DSL6A, or DSL6B cells. Down-regulation is associated with the change of an azaserine-induced acinar cell carcinoma to a ductal phenotype.

It is found in the nucleus. Its subcellular location is the cytoplasm. Its function is as follows. Transcription factor implicated in the cell fate determination in various organs. Binds to the E-box consensus sequence 5'-CANNTG-3'. Plays a role in early and late pancreas development and differentiation. Important for determining whether cells allocated to the pancreatic buds continue towards pancreatic organogenesis or revert back to duodenal fates. May be involved in the maintenance of exocrine pancreas-specific gene expression including ELA1 and amylase. Required for the formation of pancreatic acinar and ductal cells. Plays an important role in cerebellar development. Directly regulated by FOXN4 and RORC during retinal development, FOXN4-PTF1A pathway plays a central role in directing the differentiation of retinal progenitors towards horizontal and amacrine fates. The sequence is that of Pancreas transcription factor 1 subunit alpha (Ptf1a) from Rattus norvegicus (Rat).